A 496-amino-acid polypeptide reads, in one-letter code: Flt3-interacting zinc finger protein 1 (496 aa).

The residue at position 1 (methionine 1) is an N-acetylmethionine. 6 consecutive C2H2-type zinc fingers follow at residues 23-45 (FHCSECGKSFRYRSDLRRHFARH), 51-73 (HACPRCGKGFKHSFNLANHLRSH), 79-101 (YRCSACPKGFRDSTGLLHHQVVH), 107-130 (YCCLVCELRFSSRSSLGRHLKRQH), 200-222 (FACGACARRFDHGRELAAHWAAH), and 228-250 (FKCPRCERDFNAPALLERHKLTH). The tract at residues 250–280 (HDLQGPGAPPAQAWAAGPGAGPETAGEGTAA) is disordered. Residues 259–280 (PAQAWAAGPGAGPETAGEGTAA) show a composition bias toward low complexity. 5 consecutive C2H2-type zinc fingers follow at residues 331 to 352 (YQCDCGTFFASAAALASHLEAH), 358 to 381 (YGCGHCGALYAALAALEEHRRVSH), 414 to 436 (FGCSECEKLFRSPRDLERHVLVH), 442 to 464 (FPCLECGKFFRHECYLKRHRLLH), and 470 to 492 (FPCHICGKGFITLSNLSRHLKLH). The segment at 378 to 412 (RVSHGEGGGEEAATAAREREPASGEPPSGSGRGKK) is disordered.

In terms of assembly, interacts with FLT3 cytoplasmic catalytic domain, following receptor stimulation, in a kinase-independent manner. Does not interact with other structurally related receptor tyrosine kinases, including KIT, CSF1R and PDGFR. Interacts with NRL. Widely expressed.

Its subcellular location is the cytoplasm. It localises to the nucleus. Its function is as follows. May be a transcriptional repressor of NRL function in photoreceptors. Does not repress CRX-mediated transactivation. This chain is Flt3-interacting zinc finger protein 1 (FIZ1), found in Homo sapiens (Human).